The following is a 469-amino-acid chain: Adenosylhomocysteinase (469 aa).

Substrate contacts are provided by Thr63, Asp139, and Glu164. 165–167 (TTT) lines the NAD(+) pocket. 2 residues coordinate substrate: Lys194 and Asp198. NAD(+) is bound by residues Asn199, 228–233 (GYGDVG), Glu251, Asn300, 321–323 (IGH), and Asn375.

Belongs to the adenosylhomocysteinase family. It depends on NAD(+) as a cofactor.

It localises to the cytoplasm. The catalysed reaction is S-adenosyl-L-homocysteine + H2O = L-homocysteine + adenosine. The protein operates within amino-acid biosynthesis; L-homocysteine biosynthesis; L-homocysteine from S-adenosyl-L-homocysteine: step 1/1. In terms of biological role, may play a key role in the regulation of the intracellular concentration of adenosylhomocysteine. The polypeptide is Adenosylhomocysteinase (Pseudomonas fluorescens (strain ATCC BAA-477 / NRRL B-23932 / Pf-5)).